The primary structure comprises 349 residues: Holliday junction branch migration complex subunit RuvB (349 aa).

The large ATPase domain (RuvB-L) stretch occupies residues 1–183 (MTDPSRLVTP…FGIPIRLNFY (183 aa)). Residues Leu22, Arg23, Gly64, Lys67, Thr68, Thr69, 130–132 (EDF), Arg173, Tyr183, and Arg220 each bind ATP. Thr68 contacts Mg(2+). The segment at 184–254 (TIEELESIVT…IADHALGALE (71 aa)) is small ATPAse domain (RuvB-S). The head domain (RuvB-H) stretch occupies residues 257-349 (SAGLDAMDRR…GLFGDTGDQE (93 aa)). The DNA site is built by Arg293, Arg312, and Arg317.

This sequence belongs to the RuvB family. Homohexamer. Forms an RuvA(8)-RuvB(12)-Holliday junction (HJ) complex. HJ DNA is sandwiched between 2 RuvA tetramers; dsDNA enters through RuvA and exits via RuvB. An RuvB hexamer assembles on each DNA strand where it exits the tetramer. Each RuvB hexamer is contacted by two RuvA subunits (via domain III) on 2 adjacent RuvB subunits; this complex drives branch migration. In the full resolvosome a probable DNA-RuvA(4)-RuvB(12)-RuvC(2) complex forms which resolves the HJ.

It is found in the cytoplasm. It catalyses the reaction ATP + H2O = ADP + phosphate + H(+). The RuvA-RuvB-RuvC complex processes Holliday junction (HJ) DNA during genetic recombination and DNA repair, while the RuvA-RuvB complex plays an important role in the rescue of blocked DNA replication forks via replication fork reversal (RFR). RuvA specifically binds to HJ cruciform DNA, conferring on it an open structure. The RuvB hexamer acts as an ATP-dependent pump, pulling dsDNA into and through the RuvAB complex. RuvB forms 2 homohexamers on either side of HJ DNA bound by 1 or 2 RuvA tetramers; 4 subunits per hexamer contact DNA at a time. Coordinated motions by a converter formed by DNA-disengaged RuvB subunits stimulates ATP hydrolysis and nucleotide exchange. Immobilization of the converter enables RuvB to convert the ATP-contained energy into a lever motion, pulling 2 nucleotides of DNA out of the RuvA tetramer per ATP hydrolyzed, thus driving DNA branch migration. The RuvB motors rotate together with the DNA substrate, which together with the progressing nucleotide cycle form the mechanistic basis for DNA recombination by continuous HJ branch migration. Branch migration allows RuvC to scan DNA until it finds its consensus sequence, where it cleaves and resolves cruciform DNA. In Rhodopseudomonas palustris (strain ATCC BAA-98 / CGA009), this protein is Holliday junction branch migration complex subunit RuvB.